A 1149-amino-acid polypeptide reads, in one-letter code: Guanine nucleotide exchange factor DBS (1149 aa).

Residues 52 to 224 (AATASDEIMH…DLGGTLDYCH (173 aa)) form the CRAL-TRIO domain. The stretch at 351 to 456 (LQLRHFEQGF…VTRRRGLLSK (106 aa)) is one Spectrin repeat. Phosphoserine occurs at positions 457, 462, 471, and 480. Residues 503-529 (LETGAENKIQELNEIYKEYECILNQDL) are a coiled coil. Residues 555-627 (KKLAAKQTRP…RTSSTGEEEE (73 aa)) are disordered. Positions 583–594 (PGSWRSSENSSS) are enriched in low complexity. Residues 607–616 (AKSEMSEPRQ) are compositionally biased toward basic and acidic residues. S621 carries the phosphoserine modification. T622 carries the phosphothreonine modification. Positions 632-812 (LRRHVMNELL…LGILKAVNDS (181 aa)) constitute a DH domain. The PH domain occupies 841-950 (TDHKKGHTKV…IRKVLTSQLQ (110 aa)). The tract at residues 956 to 1033 (SQHRALEQSH…EAPEEDGGWS (78 aa)) is disordered. A compositionally biased stretch (low complexity) spans 966-978 (SLPLPTPSSTSPT). Phosphoserine occurs at positions 1033, 1034, 1041, and 1042. One can recognise an SH3 domain in the interval 1055-1116 (LVPGKYTVVM…PASSLSTLLG (62 aa)).

The protein belongs to the MCF2 family. Interacts with GTP-bound RAC1. Interacts with CDC42. Interacts with RHOA. Interacts with CCPG1, which results in specific inhibition of its exchange activity toward RHOA, but does not affect its activity on CDC42. As to expression, expressed at low levels in several hemopoietic cell lines and in thymus and spleen, and at higher levels in other tissues, particularly in brain.

Its subcellular location is the cytoplasm. The protein localises to the cell membrane. Functionally, guanine nucleotide exchange factor that catalyzes guanine nucleotide exchange on RHOA and CDC42, and thereby contributes to the regulation of RHOA and CDC42 signaling pathways. Seems to lack activity with RAC1. Becomes activated and highly tumorigenic by truncation of the N-terminus. The chain is Guanine nucleotide exchange factor DBS (Mcf2l) from Mus musculus (Mouse).